Consider the following 433-residue polypeptide: MRIYQPTLLIFTTVVLLSISAVAPGGSRQLLYTRDDPITIPPYLIFENVRLERAYVALQAWKRAMISDPWNLTTNWFGSRVCDYNGVVCSESLDDPLVKTVSGVDLNQGDIAGHLPEELGLLTDIALFHVNSNRFCGTLPVGFSQLSLLFELDLSNNRFAGKFPEVVIGLPKLKYLDLRYNEFEGELPESLFDKDLDALFLNSNRFRSKIPVNMGNSPVSVLVLASNRFEGCIPPSFGKMGKTLNEIILMDNGLQSCIPNDMGLLQNVTVLDISYNWLVGELPKSMGQMENLEVLNVERNMLSGLIPDELCSLEKLRDFRYGSNYFTGEPATCRYLENYNYTMNCFKDVRDQRSMMECKMFLSKPVDCDSFKCSPGSSCFSPPPSQISPSSQPLAPAPSPTSPPLSTPPPARPCPPVYSPPPPPPLSLAPSMN.

Positions 1-21 are cleaved as a signal peptide; it reads MRIYQPTLLIFTTVVLLSISA. Asparagine 71 carries an N-linked (GlcNAc...) asparagine glycan. 9 LRR repeats span residues 98–122, 123–145, 146–170, 171–194, 196–217, 219–239, 241–265, 266–289, and 290–313; these read VKTVSGVDLNQGDIAGHLPEELGLL, TDIALFHVNSNRFCGTLPVGFSQ, LSLLFELDLSNNRFAGKFPEVVIGL, PKLKYLDLRYNEFEGELPESLFDK, LDALFLNSNRFRSKIPVNMGNS, VSVLVLASNRFEGCIPPSFGK, GKTLNEIILMDNGLQSCIPNDMGLL, QNVTVLDISYNWLVGELPKSMGQM, and ENLEVLNVERNMLSGLIPDELCSL. The N-linked (GlcNAc...) asparagine glycan is linked to asparagine 267. N-linked (GlcNAc...) asparagine glycosylation occurs at asparagine 340. Residues 380-433 form a disordered region; it reads FSPPPSQISPSSQPLAPAPSPTSPPLSTPPPARPCPPVYSPPPPPPLSLAPSMN. Residues 381 to 433 are contains the Ser-Pro(4) repeats; it reads SPPPSQISPSSQPLAPAPSPTSPPLSTPPPARPCPPVYSPPPPPPLSLAPSMN. The segment covering 395 to 427 has biased composition (pro residues); that stretch reads APAPSPTSPPLSTPPPARPCPPVYSPPPPPPLS.

In terms of processing, hydroxylated on proline residues in the S-P-P-P-P repeat. Post-translationally, O-glycosylated on hydroxyprolines. As to expression, expressed in flowers and pollen.

The protein localises to the secreted. The protein resides in the cell wall. Its function is as follows. Modulates cell morphogenesis by regulating cell wall formation and assembly, and/or growth polarization. This Arabidopsis thaliana (Mouse-ear cress) protein is Leucine-rich repeat extensin-like protein 7 (LRX7).